Reading from the N-terminus, the 57-residue chain is uncharacterized protein (57 aa).

A helical transmembrane segment spans residues 12–34; the sequence is VIAVLSLFVFAVAVFFVGMALLT.

The protein localises to the membrane. This is an uncharacterized protein from Pasteurella multocida (strain Pm70).